The sequence spans 232 residues: Ribose-5-phosphate isomerase A (232 aa).

Substrate is bound by residues 28–31, 83–86, and 96–99; these read TGST, DGAD, and KGGG. The Proton acceptor role is filled by Glu105. Substrate is bound at residue Lys123.

Belongs to the ribose 5-phosphate isomerase family. In terms of assembly, homodimer.

The catalysed reaction is aldehydo-D-ribose 5-phosphate = D-ribulose 5-phosphate. The protein operates within carbohydrate degradation; pentose phosphate pathway; D-ribose 5-phosphate from D-ribulose 5-phosphate (non-oxidative stage): step 1/1. Catalyzes the reversible conversion of ribose-5-phosphate to ribulose 5-phosphate. This Rhodopseudomonas palustris (strain ATCC BAA-98 / CGA009) protein is Ribose-5-phosphate isomerase A.